We begin with the raw amino-acid sequence, 159 residues long: ATP synthase subunit b (159 aa).

Residues 2-22 (EFNLVTIGFTIVNFIILMLIL) traverse the membrane as a helical segment.

This sequence belongs to the ATPase B chain family. As to quaternary structure, F-type ATPases have 2 components, F(1) - the catalytic core - and F(0) - the membrane proton channel. F(1) has five subunits: alpha(3), beta(3), gamma(1), delta(1), epsilon(1). F(0) has three main subunits: a(1), b(2) and c(10-14). The alpha and beta chains form an alternating ring which encloses part of the gamma chain. F(1) is attached to F(0) by a central stalk formed by the gamma and epsilon chains, while a peripheral stalk is formed by the delta and b chains.

Its subcellular location is the cell membrane. Functionally, f(1)F(0) ATP synthase produces ATP from ADP in the presence of a proton or sodium gradient. F-type ATPases consist of two structural domains, F(1) containing the extramembraneous catalytic core and F(0) containing the membrane proton channel, linked together by a central stalk and a peripheral stalk. During catalysis, ATP synthesis in the catalytic domain of F(1) is coupled via a rotary mechanism of the central stalk subunits to proton translocation. Its function is as follows. Component of the F(0) channel, it forms part of the peripheral stalk, linking F(1) to F(0). The sequence is that of ATP synthase subunit b from Clostridium acetobutylicum (strain ATCC 824 / DSM 792 / JCM 1419 / IAM 19013 / LMG 5710 / NBRC 13948 / NRRL B-527 / VKM B-1787 / 2291 / W).